The chain runs to 71 residues: Omega-conotoxin-like CnVIIE (71 aa).

The first 22 residues, 1-22, serve as a signal peptide directing secretion; that stretch reads MKLTCVVIVAVLLLTACQLITA. Residues 23–45 constitute a propeptide that is removed on maturation; that stretch reads DDSRGTQKHRALRSDTKLSMSTR. Cystine bridges form between Cys-46–Cys-61, Cys-53–Cys-65, and Cys-60–Cys-70. Pro-52 is modified (4-hydroxyproline; partial). Cys-70 carries the cysteine amide modification.

It belongs to the conotoxin M superfamily. In terms of tissue distribution, expressed by the venom duct.

Its subcellular location is the secreted. Its function is as follows. Omega-conotoxins act at presynaptic membranes, they bind and block voltage-gated calcium channels (Cav). The polypeptide is Omega-conotoxin-like CnVIIE (Conus consors (Singed cone)).